A 207-amino-acid polypeptide reads, in one-letter code: Cytochrome c biogenesis ATP-binding export protein CcmA (207 aa).

One can recognise an ABC transporter domain in the interval 4 to 207 (LEARELLCER…RISLTQTRAA (204 aa)). 36–43 (GSNGAGKT) is an ATP binding site.

Belongs to the ABC transporter superfamily. CcmA exporter (TC 3.A.1.107) family. In terms of assembly, the complex is composed of two ATP-binding proteins (CcmA) and two transmembrane proteins (CcmB).

Its subcellular location is the cell inner membrane. The catalysed reaction is heme b(in) + ATP + H2O = heme b(out) + ADP + phosphate + H(+). Functionally, part of the ABC transporter complex CcmAB involved in the biogenesis of c-type cytochromes; once thought to export heme, this seems not to be the case, but its exact role is uncertain. Responsible for energy coupling to the transport system. The protein is Cytochrome c biogenesis ATP-binding export protein CcmA of Shigella sonnei (strain Ss046).